Reading from the N-terminus, the 348-residue chain is Ferredoxin--NADP reductase 1 (348 aa).

Residues Glu-36, Lys-44, Tyr-48, Ile-88, Pro-123, Asp-285, and Ser-326 each contribute to the FAD site. The tract at residues 329–348 (EKFKKKNEQLKQEKQAQLMN) is disordered.

This sequence belongs to the ferredoxin--NADP reductase type 2 family. In terms of assembly, homodimer. It depends on FAD as a cofactor.

The catalysed reaction is 2 reduced [2Fe-2S]-[ferredoxin] + NADP(+) + H(+) = 2 oxidized [2Fe-2S]-[ferredoxin] + NADPH. In Shouchella clausii (strain KSM-K16) (Alkalihalobacillus clausii), this protein is Ferredoxin--NADP reductase 1.